A 281-amino-acid polypeptide reads, in one-letter code: ATP phosphoribosyltransferase (281 aa).

Belongs to the ATP phosphoribosyltransferase family. Long subfamily. Mg(2+) serves as cofactor.

It is found in the cytoplasm. It carries out the reaction 1-(5-phospho-beta-D-ribosyl)-ATP + diphosphate = 5-phospho-alpha-D-ribose 1-diphosphate + ATP. It functions in the pathway amino-acid biosynthesis; L-histidine biosynthesis; L-histidine from 5-phospho-alpha-D-ribose 1-diphosphate: step 1/9. With respect to regulation, feedback inhibited by histidine. Its function is as follows. Catalyzes the condensation of ATP and 5-phosphoribose 1-diphosphate to form N'-(5'-phosphoribosyl)-ATP (PR-ATP). Has a crucial role in the pathway because the rate of histidine biosynthesis seems to be controlled primarily by regulation of HisG enzymatic activity. This chain is ATP phosphoribosyltransferase, found in Corynebacterium jeikeium (strain K411).